We begin with the raw amino-acid sequence, 691 residues long: Elongation factor G (691 aa).

The 276-residue stretch at 8–283 (KKVRNIGIAA…AVVAYLPAPD (276 aa)) folds into the tr-type G domain. GTP is bound by residues 17 to 24 (AHIDAGKT), 81 to 85 (DTPGH), and 135 to 138 (NKMD).

This sequence belongs to the TRAFAC class translation factor GTPase superfamily. Classic translation factor GTPase family. EF-G/EF-2 subfamily.

Its subcellular location is the cytoplasm. Its function is as follows. Catalyzes the GTP-dependent ribosomal translocation step during translation elongation. During this step, the ribosome changes from the pre-translocational (PRE) to the post-translocational (POST) state as the newly formed A-site-bound peptidyl-tRNA and P-site-bound deacylated tRNA move to the P and E sites, respectively. Catalyzes the coordinated movement of the two tRNA molecules, the mRNA and conformational changes in the ribosome. The chain is Elongation factor G from Campylobacter jejuni subsp. jejuni serotype O:23/36 (strain 81-176).